The primary structure comprises 98 residues: Small ribosomal subunit protein uS17 (98 aa).

This sequence belongs to the universal ribosomal protein uS17 family. Part of the 30S ribosomal subunit.

Functionally, one of the primary rRNA binding proteins, it binds specifically to the 5'-end of 16S ribosomal RNA. This Carboxydothermus hydrogenoformans (strain ATCC BAA-161 / DSM 6008 / Z-2901) protein is Small ribosomal subunit protein uS17.